The following is a 589-amino-acid chain: Delta-like protein 3 (589 aa).

An N-terminal signal peptide occupies residues 1–32 (MVSLQVSSLPQTLILAFLLPQALPAGVFELQI). Topologically, residues 33-494 (HSFGPGPGPG…LRQADSQRFL (462 aa)) are extracellular. The DSL domain maps to 174 to 213 (ARCEPPAVGAACARLCRSRSAPSRCGPGLRPCTPFPDECE). 6 EGF-like domains span residues 218–251 (SLTV…PLCT), 276–312 (GPGP…PRCE), 314–353 (SGVT…SNCE), 355–391 (RVDR…PRCE), 393–429 (DLDD…RDCR), and 431–467 (RADP…VRCE). 18 disulfides stabilise this stretch: cysteine 222–cysteine 233, cysteine 226–cysteine 239, cysteine 241–cysteine 250, cysteine 280–cysteine 291, cysteine 285–cysteine 300, cysteine 302–cysteine 311, cysteine 318–cysteine 329, cysteine 323–cysteine 341, cysteine 343–cysteine 352, cysteine 359–cysteine 370, cysteine 364–cysteine 379, cysteine 381–cysteine 390, cysteine 397–cysteine 408, cysteine 402–cysteine 417, cysteine 419–cysteine 428, cysteine 435–cysteine 446, cysteine 440–cysteine 455, and cysteine 457–cysteine 466. The helical transmembrane segment at 495-515 (LPPALGLLAAAALAGAALLLI) threads the bilayer. Residues 516–589 (HVRRRGPGRD…PAPSIYAREA (74 aa)) lie on the Cytoplasmic side of the membrane. The segment at 552–574 (QDGAGDGPTSSADWNHPEDGDSR) is disordered.

Can bind and activate Notch-1 or another Notch receptor. In terms of processing, ubiquitinated by MIB (MIB1 or MIB2), leading to its endocytosis and subsequent degradation.

Its subcellular location is the membrane. Inhibits primary neurogenesis. May be required to divert neurons along a specific differentiation pathway. Plays a role in the formation of somite boundaries during segmentation of the paraxial mesoderm. The protein is Delta-like protein 3 (Dll3) of Rattus norvegicus (Rat).